The sequence spans 2625 residues: Highly reducing polyketide synthase frbB (2625 aa).

Basic and acidic residues predominate over residues 1–10 (MRNIDEHMSE). A disordered region spans residues 1–25 (MRNIDEHMSERATLQSSGGYGERDS). Residues 27 to 449 (VEPIAIIGMS…GTNAHVILDR (423 aa)) enclose the Ketosynthase family 3 (KS3) domain. Residues Cys-200, His-334, and His-375 each act as for beta-ketoacyl synthase activity in the active site. The tract at residues 563–883 (YVFSGQGAQY…DAASTLLTTI (321 aa)) is malonyl-CoA:ACP transacylase (MAT) domain. The segment at 942-1080 (HELLGNMSTD…GRIRAVLDDS (139 aa)) is N-terminal hotdog fold. The tract at residues 942-1252 (HELLGNMSTD…GMILAKLPGG (311 aa)) is dehydratase (DH) domain. Residues 942–1255 (HELLGNMSTD…LAKLPGGTSR (314 aa)) enclose the PKS/mFAS DH domain. The active-site Proton acceptor; for dehydratase activity is His-974. The interval 1102–1255 (VRFVSPSAFY…LAKLPGGTSR (154 aa)) is C-terminal hotdog fold. The active-site Proton donor; for dehydratase activity is the Asp-1167. The segment at 1490 to 1673 (YHQIKAYIAE…GFVDTEPVFR (184 aa)) is methyltransferase (CMet) domain. Positions 1907–2220 (GLLETFHWKP…SGKHIGKVIL (314 aa)) are enoyl reductase (ER) domain. The tract at residues 2261-2439 (AVYIVVGGLG…GYSINIGPVS (179 aa)) is ketoreductase (KR) domain. Positions 2542-2619 (GAEAAVLTAI…HLARLAAEES (78 aa)) constitute a Carrier domain. An O-(pantetheine 4'-phosphoryl)serine modification is found at Ser-2579.

Its pathway is antifungal biosynthesis. Functionally, highly reducing polyketide synthase; part of the gene cluster that mediates the biosynthesis of the antifungal antibiotic FR901469, an inhibitor of beta-1,3-glucansynthase, exerting antifungal activity against the pathogenes Candida albicans and Aspergillus fumigatus. FR901469 is a cyclic depsipeptide containing 12 amino acid residues and a fatty acid chain. The NRPS frbI contains 12 modules responsible for the formation of the depsipeptide backbone which is denoted as Acyl-Thr-Ala-Tyr-Val-4OHPro-Thr-Thr-3OHPro-threo3OHGln-Gly-Thr-Orn-OH (C71H116N14O23). The PKS frbB is probably involved in the production of the hydrocarbon chain, and the acyl-CoA ligase frbC might be involved in the transport of the chain to the peptide ptoduct of frbI. Because FR901469 contains 3 hydroxylated amino acid residues, the 3 oxygenases frbA, frbH, and frbJ might be participating in amino acid hydroxylation. As no thioesterase domains were detected in frbI or frbB, the thioesterases frbD and frbE may instead release and cyclize the products of the NRPS and PKS, respectively. This is Highly reducing polyketide synthase frbB from Dothideomycetidae sp. (strain 11243) (Fungal sp. (strain No.11243)).